Reading from the N-terminus, the 143-residue chain is MIFNCGILFRKELKDFPCELGLLLVGDSDMRKINRLRRGKDKTTDVLSFPLEFDSAPLQNVLQKRTGFDSNSLPPIALGEIVISVDTLEKQAVEIGHSVKDEFYRLLVHGFLHLLGYDHERGEEEERIMKLKEDECLEILQEL.

Zn(2+)-binding residues include His-109, His-113, and His-119.

The protein belongs to the endoribonuclease YbeY family. Zn(2+) serves as cofactor.

The protein resides in the cytoplasm. Functionally, single strand-specific metallo-endoribonuclease involved in late-stage 70S ribosome quality control and in maturation of the 3' terminus of the 16S rRNA. The sequence is that of Endoribonuclease YbeY from Leptospira borgpetersenii serovar Hardjo-bovis (strain JB197).